Consider the following 464-residue polypeptide: Soluble pyridine nucleotide transhydrogenase (464 aa).

D35–C44 lines the FAD pocket.

The protein belongs to the class-I pyridine nucleotide-disulfide oxidoreductase family. FAD serves as cofactor.

The protein resides in the cytoplasm. The catalysed reaction is NAD(+) + NADPH = NADH + NADP(+). In terms of biological role, conversion of NADPH, generated by peripheral catabolic pathways, to NADH, which can enter the respiratory chain for energy generation. This Pseudomonas paraeruginosa (strain DSM 24068 / PA7) (Pseudomonas aeruginosa (strain PA7)) protein is Soluble pyridine nucleotide transhydrogenase.